Here is an 88-residue protein sequence, read N- to C-terminus: Small ribosomal subunit protein bS20 (88 aa).

Belongs to the bacterial ribosomal protein bS20 family.

In terms of biological role, binds directly to 16S ribosomal RNA. The protein is Small ribosomal subunit protein bS20 of Rhodopseudomonas palustris (strain BisB18).